The sequence spans 747 residues: Phenylalanine ammonia-lyase 2 (747 aa).

The segment covering Met1–Gly20 has biased composition (polar residues). The tract at residues Met1 to Ser47 is disordered. Catalysis depends on Tyr124, which acts as the Proton donor/acceptor. The 5-imidazolinone (Ala-Gly) cross-link spans Ala229–Gly231. Ser230 carries the 2,3-didehydroalanine (Ser) modification. 7 residues coordinate (E)-cinnamate: Asn290, Gln380, Arg386, Asn416, Lys487, Glu515, and Asn518.

This sequence belongs to the PAL/histidase family. Homotetramer. In terms of processing, contains an active site 4-methylidene-imidazol-5-one (MIO), which is formed autocatalytically by cyclization and dehydration of residues Ala-Ser-Gly.

It is found in the cytoplasm. The enzyme catalyses L-phenylalanine = (E)-cinnamate + NH4(+). The protein operates within phenylpropanoid metabolism; trans-cinnamate biosynthesis; trans-cinnamate from L-phenylalanine: step 1/1. Its function is as follows. Catalyzes the non-oxidative deamination of L-phenylalanine to form trans-cinnamic acid and a free ammonium ion. Facilitates the commitment step in phenylpropanoid pathways that produce secondary metabolites such as lignins, coumarins and flavonoids. The chain is Phenylalanine ammonia-lyase 2 from Pleurotus ostreatus (Oyster mushroom).